The chain runs to 329 residues: ATP-dependent (S)-NAD(P)H-hydrate dehydratase (329 aa).

A mitochondrion-targeting transit peptide spans 1 to 28 (MALGPGCRAVRGCRPVLKRAFSLHKAHS). One can recognise a YjeF C-terminal domain in the interval 35 to 326 (ILQLVRSVVP…AEVGPAFRRL (292 aa)). Lys49 carries the N6-acetyllysine modification. At Tyr67 the chain carries Phosphotyrosine. (6S)-NADPHX contacts are provided by residues Gly135 and 188-194 (NHVEFGR). Residues 228–232 (KGEQD) and 247–256 (GSGRRCGGQG) contribute to the ATP site. Asp257 is a (6S)-NADPHX binding site.

This sequence belongs to the NnrD/CARKD family. Mg(2+) serves as cofactor.

The protein localises to the mitochondrion. The catalysed reaction is (6S)-NADHX + ATP = ADP + phosphate + NADH + H(+). It catalyses the reaction (6S)-NADPHX + ATP = ADP + phosphate + NADPH + H(+). Catalyzes the dehydration of the S-form of NAD(P)HX at the expense of ATP, which is converted to ADP. Together with NAD(P)HX epimerase, which catalyzes the epimerization of the S- and R-forms, the enzyme allows the repair of both epimers of NAD(P)HX, a damaged form of NAD(P)H that is a result of enzymatic or heat-dependent hydration. The sequence is that of ATP-dependent (S)-NAD(P)H-hydrate dehydratase from Bos taurus (Bovine).